Here is a 271-residue protein sequence, read N- to C-terminus: Structure-specific endonuclease subunit SLX1 (271 aa).

In terms of domain architecture, GIY-YIG spans Arg9–Val94. The segment at Cys182–Cys234 adopts an SLX1-type zinc-finger fold.

This sequence belongs to the SLX1 family. In terms of assembly, forms a heterodimer with SLX4. It depends on a divalent metal cation as a cofactor.

It is found in the nucleus. In terms of biological role, catalytic subunit of the SLX1-SLX4 structure-specific endonuclease that resolves DNA secondary structures generated during DNA repair and recombination. Has endonuclease activity towards branched DNA substrates, introducing single-strand cuts in duplex DNA close to junctions with ss-DNA. Has a preference for 5'-flap structures, and promotes symmetrical cleavage of static and migrating Holliday junctions (HJs). Resolves HJs by generating two pairs of ligatable, nicked duplex products. The sequence is that of Structure-specific endonuclease subunit SLX1 (Slx1b) from Rattus norvegicus (Rat).